Reading from the N-terminus, the 295-residue chain is Movement protein BC1 (295 aa).

The protein belongs to the begomovirus movement protein BC1 family. As to quaternary structure, binds to dimeric supercoiled plasmid DNA. In terms of processing, phosphorylated.

The protein resides in the host cell membrane. It is found in the host microsome membrane. It localises to the host endoplasmic reticulum membrane. Its function is as follows. Transports viral genome to neighboring plant cells directly through plasmosdesmata, without any budding. The movement protein allows efficient cell to cell propagation, by bypassing the host cell wall barrier. Begomovirus genome is shuttled out of nucleus by Nuclear shuttle protein (NSP) and the movement protein transports the DNA-NSP complex to cell plasmodesmata and facilitates further movement across the cell wall. In Brassica oleracea (Wild cabbage), this protein is Movement protein BC1.